We begin with the raw amino-acid sequence, 450 residues long: Ceramide glucosyltransferase (450 aa).

The Lumenal portion of the chain corresponds to 1 to 8 (MSDSGTLS). Residues 9 to 29 (LIGGIVFLVLWVVVWSICLLG) form a helical membrane-spanning segment. Residues 30 to 337 (WRTARIRYAH…IRVRKKMTLA (308 aa)) lie on the Cytoplasmic side of the membrane. Residue Asp96 is a short sequence motif, D1. Residue Asp148 is a short sequence motif, D2. Residue Asp286 is a short sequence motif, D3. Residue Asp286 is the Proton acceptor of the active site. The (Q/R)XXRW signature appears at 323–327 (RRVRW). Residues 338-358 (ATLLEPLTESIISGLYGAWAI) traverse the membrane as a helical segment. Residues 359 to 361 (SRL) are Lumenal-facing. Residues 362–382 (LGGNILPLFLLHMAAWISVDI) traverse the membrane as a helical segment. Topologically, residues 383-401 (STKRALETNIKGIGPPESK) are cytoplasmic. The helical transmembrane segment at 402–422 (VTFLMAWAARECLALPIWMLA) threads the bilayer. Topologically, residues 423 to 450 (MTSSEVVWRGQKYKIIASGEAIRLGDRN) are lumenal.

The protein belongs to the glycosyltransferase 2 family.

It localises to the golgi apparatus membrane. It carries out the reaction an N-acylsphing-4-enine + UDP-alpha-D-glucose = a beta-D-glucosyl-(1&lt;-&gt;1')-N-acylsphing-4-enine + UDP + H(+). Its pathway is lipid metabolism; sphingolipid metabolism. Catalyzes the final step in the biosynthesis of the membrane lipid glucosylceramide (GluCer), the transfer of glucose to ceramide. Glucosylceramides play important roles in growth, differentiation and pathogenicity. Essential factor in determining the success of fungal infection by regulating survival of yeast cells during the initial colonization of the host lung. This chain is Ceramide glucosyltransferase, found in Cryptococcus neoformans var. grubii serotype A (strain H99 / ATCC 208821 / CBS 10515 / FGSC 9487) (Filobasidiella neoformans var. grubii).